A 171-amino-acid polypeptide reads, in one-letter code: 3-hydroxydecanoyl-[acyl-carrier-protein] dehydratase (171 aa).

His71 is a catalytic residue.

The protein belongs to the thioester dehydratase family. FabA subfamily. Homodimer.

Its subcellular location is the cytoplasm. It carries out the reaction a (3R)-hydroxyacyl-[ACP] = a (2E)-enoyl-[ACP] + H2O. The enzyme catalyses (3R)-hydroxydecanoyl-[ACP] = (2E)-decenoyl-[ACP] + H2O. The catalysed reaction is (2E)-decenoyl-[ACP] = (3Z)-decenoyl-[ACP]. Its pathway is lipid metabolism; fatty acid biosynthesis. In terms of biological role, necessary for the introduction of cis unsaturation into fatty acids. Catalyzes the dehydration of (3R)-3-hydroxydecanoyl-ACP to E-(2)-decenoyl-ACP and then its isomerization to Z-(3)-decenoyl-ACP. Can catalyze the dehydratase reaction for beta-hydroxyacyl-ACPs with saturated chain lengths up to 16:0, being most active on intermediate chain length. In Hamiltonella defensa subsp. Acyrthosiphon pisum (strain 5AT), this protein is 3-hydroxydecanoyl-[acyl-carrier-protein] dehydratase.